Reading from the N-terminus, the 384-residue chain is V-type proton ATPase subunit C (384 aa).

The protein belongs to the V-ATPase C subunit family. In terms of assembly, V-ATPase is a heteromultimeric enzyme made up of two complexes: the ATP-hydrolytic V1 complex and the proton translocation V0 complex. The V1 complex consists of three catalytic AB heterodimers that form a heterohexamer, three peripheral stalks each consisting of EG heterodimers, one central rotor including subunits D and F, and the regulatory subunits C and H. The proton translocation complex V0 consists of the proton transport subunit a, a ring of proteolipid subunits c9c'', rotary subunit d, subunits e and f, and the accessory subunits vah-19/Ac45 and vah-20/PRR. Interacts with V-type proton ATPase subunits a1 unc-32, a2 vha-5 and a3 vha-6. Expressed ubiquitously; higher levels are found in gastrointestinal and hypodermal cells, as well as H-shaped excretory cell.

The protein resides in the cytoplasm. It is found in the membrane. Subunit of the V1 complex of vacuolar(H+)-ATPase (V-ATPase), a multisubunit enzyme composed of a peripheral complex (V1) that hydrolyzes ATP and a membrane integral complex (V0) that translocates protons. V-ATPase is responsible for acidifying and maintaining the pH of intracellular compartments and in some cell types, is targeted to the plasma membrane, where it is responsible for acidifying the extracellular environment. Subunit C is necessary for the assembly of the catalytic sector of the enzyme and is likely to have a specific function in its catalytic activity. Has roles in embryogenesis and ovulation. This chain is V-type proton ATPase subunit C, found in Caenorhabditis elegans.